A 53-amino-acid polypeptide reads, in one-letter code: Conotoxin Cal6.31 (53 aa).

The first 24 residues, 1–24 (MKLTCVLIAAVLLLAVCQLDSADA), serve as a signal peptide directing secretion. Intrachain disulfides connect cysteine 29/cysteine 43, cysteine 36/cysteine 47, and cysteine 42/cysteine 51.

It belongs to the conotoxin O1 superfamily. Expressed by the venom duct.

It localises to the secreted. Functionally, probable neurotoxin. This Californiconus californicus (California cone) protein is Conotoxin Cal6.31.